The chain runs to 361 residues: Phosphoribosylformylglycinamidine cyclo-ligase (361 aa).

This sequence belongs to the AIR synthase family.

It localises to the cytoplasm. The catalysed reaction is 2-formamido-N(1)-(5-O-phospho-beta-D-ribosyl)acetamidine + ATP = 5-amino-1-(5-phospho-beta-D-ribosyl)imidazole + ADP + phosphate + H(+). It functions in the pathway purine metabolism; IMP biosynthesis via de novo pathway; 5-amino-1-(5-phospho-D-ribosyl)imidazole from N(2)-formyl-N(1)-(5-phospho-D-ribosyl)glycinamide: step 2/2. In Bartonella henselae (strain ATCC 49882 / DSM 28221 / CCUG 30454 / Houston 1) (Rochalimaea henselae), this protein is Phosphoribosylformylglycinamidine cyclo-ligase.